Consider the following 199-residue polypeptide: Pyridoxine/pyridoxamine 5'-phosphate oxidase (199 aa).

FMN is bound by residues 44 to 49 (RTVLLK), 59 to 60 (YT), K66, and Q91. K49 contributes to the substrate binding site. Substrate-binding residues include Y109, R113, and S117. FMN contacts are provided by residues 126–127 (QS) and W171. 177–179 (RLH) is a substrate binding site. Residue R181 participates in FMN binding.

This sequence belongs to the pyridoxamine 5'-phosphate oxidase family. As to quaternary structure, homodimer. FMN serves as cofactor.

It carries out the reaction pyridoxamine 5'-phosphate + O2 + H2O = pyridoxal 5'-phosphate + H2O2 + NH4(+). It catalyses the reaction pyridoxine 5'-phosphate + O2 = pyridoxal 5'-phosphate + H2O2. Its pathway is cofactor metabolism; pyridoxal 5'-phosphate salvage; pyridoxal 5'-phosphate from pyridoxamine 5'-phosphate: step 1/1. The protein operates within cofactor metabolism; pyridoxal 5'-phosphate salvage; pyridoxal 5'-phosphate from pyridoxine 5'-phosphate: step 1/1. Catalyzes the oxidation of either pyridoxine 5'-phosphate (PNP) or pyridoxamine 5'-phosphate (PMP) into pyridoxal 5'-phosphate (PLP). The sequence is that of Pyridoxine/pyridoxamine 5'-phosphate oxidase from Xanthomonas campestris pv. campestris (strain 8004).